Consider the following 1067-residue polypeptide: UPF0507 protein KLLA0D01133g (1067 aa).

One can recognise a VPS9 domain in the interval 280–432; it reads IVEDQELEHR…FHQDTVDSLT (153 aa).

The protein belongs to the UPF0507 family.

The sequence is that of UPF0507 protein KLLA0D01133g from Kluyveromyces lactis (strain ATCC 8585 / CBS 2359 / DSM 70799 / NBRC 1267 / NRRL Y-1140 / WM37) (Yeast).